Reading from the N-terminus, the 449-residue chain is MEFFISMSETIKYNDDDHKTLFLKTLNEQRLEGEFCDIAIVVEDVKFRAHRCVLAACSTYFKKLFKKLEVDSSSVIEIDFLRSDIFEEVLNYMYTAKISVKKEDVNLMMSSGQILGIRFLDKLCSQKRDVSSPDENNGQSKSKYCLKINRPIGDAADTQDDDVEEIGDQDDSPSDDTVEGTPPSQEDGKSPTTTLRVQEAILKELGSEEVRKVNCYGQEVESMETPESKDLGSQTPQALTFNDGMSEVKDEQTPGWTTAASDMKFEYLLYGHHREQIACQACGKTFSDEGRLRKHEKLHTADRPFVCEMCTKGFTTQAHLKEHLKIHTGYKPYSCEVCGKSFIRAPDLKKHERVHSNERPFACHMCDKAFKHKSHLKDHERRHRGEKPFVCGSCTKAFAKASDLKRHENNMHSERKQVTPSAIQSETEQLQAAAMAAEAEQQLETIACS.

Residues 36 to 102 (CDIAIVVEDV…MYTAKISVKK (67 aa)) form the BTB domain. Lysine 46 is covalently cross-linked (Glycyl lysine isopeptide (Lys-Gly) (interchain with G-Cter in SUMO2)). The short motif at 50-66 (HRCVLAACSTYFKKLFK) is the Nuclear localization signal element. Residues 153–194 (GDAADTQDDDVEEIGDQDDSPSDDTVEGTPPSQEDGKSPTTT) form a disordered region. Positions 157-178 (DTQDDDVEEIGDQDDSPSDDTV) are enriched in acidic residues. Residues lysine 203 and lysine 249 each participate in a glycyl lysine isopeptide (Lys-Gly) (interchain with G-Cter in SUMO2) cross-link. C2H2-type zinc fingers lie at residues 277 to 304 (IACQ…ADRP), 305 to 332 (FVCE…GYKP), 333 to 360 (YSCE…NERP), 361 to 388 (FACH…GEKP), and 389 to 417 (FVCG…ERKQ).

It belongs to the krueppel C2H2-type zinc-finger protein family. Interacts with ZBTB21.

The protein localises to the nucleus. Functionally, transcriptional activator of the dopamine transporter (DAT), binding it's promoter at the consensus sequence 5'-CCTGCACAGTTCACGGA-3'. Binds to 5'-d(GCC)(n)-3' trinucleotide repeats in promoter regions and acts as a repressor of the FMR1 gene. Transcriptional repressor of MYC and thymidine kinase promoters. In Homo sapiens (Human), this protein is Zinc finger and BTB domain-containing protein 14 (ZBTB14).